The sequence spans 246 residues: U11/U12 small nuclear ribonucleoprotein 35 kDa protein (246 aa).

An RRM domain is found at 51–129 (LTLFVARLNL…HEIFVDYELE (79 aa)). K172 is covalently cross-linked (Glycyl lysine isopeptide (Lys-Gly) (interchain with G-Cter in SUMO2)). Positions 187 to 217 (SRSRERHWDSRTRDRDHDRGREKRWQEREPT) are disordered. The span at 192 to 217 (RHWDSRTRDRDHDRGREKRWQEREPT) shows a compositional bias: basic and acidic residues.

As to quaternary structure, component of the U11/U12 snRNPs that are part of the U12-type spliceosome. Expressed in heart, liver, skeletal muscle and pancreas.

The protein resides in the nucleus. In Homo sapiens (Human), this protein is U11/U12 small nuclear ribonucleoprotein 35 kDa protein (SNRNP35).